Consider the following 524-residue polypeptide: CDC50-related protein CDC50.1 (524 aa).

Composition is skewed to polar residues over residues M1–S19 and T26–L39. 2 disordered regions span residues M1 to P40 and A52 to S86. Topologically, residues M1–V181 are cytoplasmic. Residues G67 to S80 show a composition bias toward low complexity. Residues V182–F202 form a helical membrane-spanning segment. The Extracellular segment spans residues E203 to S473. N-linked (GlcNAc...) asparagine glycosylation is found at N297 and N339. A helical transmembrane segment spans residues L474 to M494. Residues L495–K524 lie on the Cytoplasmic side of the membrane.

It belongs to the CDC50/LEM3 family. As to quaternary structure, interacts with GC; the interaction regulates guanylate cyclase GC trafficking and sensing environmental changes.

Its subcellular location is the membrane. In terms of biological role, in tachyzoites, required for the cellular trafficking of guanylate cyclase GC and UGO to the cell membrane. May play a role in the folding of the GC P-type ATPase-like domain to sense vacuolar changes in phosphatidic acid and pH levels which trigger parasite egress. In Toxoplasma gondii (strain ATCC 50853 / GT1), this protein is CDC50-related protein CDC50.1.